The following is a 292-amino-acid chain: MPKAFQTIGLIGKPNHHGTNLTLKRLHHWLTMQGFEILVEERVAAEMGPKCNSVDLLELGDRCDLAIVVGGDGNMLGAARVLARFDIGVIGVNRGNLGFLTDLPPDSFEAALGDVLEGKFETEFRFLLETEVHRHGNMKSSNTAVNEAVLHPGKVAHMIEFEVYIDNNFMYSQRADGMIVSTPTGSTAYSLSAGGAILTPNLEALILVPMFPHTLSSRPIVVDACSIIKLVVSPENGDNLEVSCDGHVMLPVLPGDEIIIKRSHERLRLIHPKGHNYFHVLRNKLGWGSKLF.

The active-site Proton acceptor is the Asp72. NAD(+)-binding positions include 72 to 73 (DG), 146 to 147 (NE), His157, Arg174, Asp176, and 187 to 192 (TAYSLS).

It belongs to the NAD kinase family. It depends on a divalent metal cation as a cofactor.

It is found in the cytoplasm. The enzyme catalyses NAD(+) + ATP = ADP + NADP(+) + H(+). Functionally, involved in the regulation of the intracellular balance of NAD and NADP, and is a key enzyme in the biosynthesis of NADP. Catalyzes specifically the phosphorylation on 2'-hydroxyl of the adenosine moiety of NAD to yield NADP. The sequence is that of NAD kinase from Shewanella woodyi (strain ATCC 51908 / MS32).